The primary structure comprises 144 residues: MPPKKKKLAGIIKLQIQAGQANPAPPVGPALGQHGVNIMEFCKAYNAATESQRGNVIPVEISVYEDRTFDFKLKTPPAAKLLLKAAGVQKGSAEPHRNKVAKVTMDQVREIAKTKMEDLNANDIDQAAKIIAGTARSMGITVEA.

It belongs to the universal ribosomal protein uL11 family. Part of the ribosomal stalk of the 50S ribosomal subunit. Interacts with L10 and the large rRNA to form the base of the stalk. L10 forms an elongated spine to which L12 dimers bind in a sequential fashion forming a multimeric L10(L12)X complex. One or more lysine residues are methylated.

Functionally, forms part of the ribosomal stalk which helps the ribosome interact with GTP-bound translation factors. This chain is Large ribosomal subunit protein uL11, found in Nocardia farcinica (strain IFM 10152).